Consider the following 44-residue polypeptide: Photosystem II reaction center protein K (44 aa).

Residues 1–7 constitute a propeptide that is removed on maturation; that stretch reads MESLLLA. A helical transmembrane segment spans residues 23 to 43; that stretch reads LPIIPVFFLLLAFVWQAAIGF.

Belongs to the PsbK family. In terms of assembly, PSII is composed of 1 copy each of membrane proteins PsbA, PsbB, PsbC, PsbD, PsbE, PsbF, PsbH, PsbI, PsbJ, PsbK, PsbL, PsbM, PsbT, PsbX, PsbY, PsbZ, Psb30/Ycf12, at least 3 peripheral proteins of the oxygen-evolving complex and a large number of cofactors. It forms dimeric complexes.

The protein localises to the plastid. Its subcellular location is the chloroplast thylakoid membrane. In terms of biological role, one of the components of the core complex of photosystem II (PSII). PSII is a light-driven water:plastoquinone oxidoreductase that uses light energy to abstract electrons from H(2)O, generating O(2) and a proton gradient subsequently used for ATP formation. It consists of a core antenna complex that captures photons, and an electron transfer chain that converts photonic excitation into a charge separation. The protein is Photosystem II reaction center protein K of Trieres chinensis (Marine centric diatom).